Consider the following 129-residue polypeptide: Insulin-like growth factor 2 (129 aa).

Positions 1–24 (MGVPMGKSLLAPLTFLALASCCFA) are cleaved as a signal peptide. Residues 25–52 (AYRPSETLCGGELVDTLQFVCGDRGFYF) are b. Cystine bridges form between cysteine 33–cysteine 72, cysteine 45–cysteine 85, and cysteine 71–cysteine 76. A c region spans residues 53-65 (SRPASRVSRRSSR). The tract at residues 66–86 (GIVEECCFRSCDLALLETYCA) is a. The d stretch occupies residues 87–92 (TPAKSE). Positions 93-129 (RDVSTPPTVLPDNFPRYPVGKFFQYDTWKQSAQRLRR) are cleaved as a propeptide — e peptide.

The protein belongs to the insulin family. Interacts with MYORG; this interaction is required for IGF2 secretion. Interacts with integrins ITGAV:ITGB3 and ITGA6:ITGB4; integrin-binding is required for IGF2 signaling. In terms of processing, proteolytically processed by PCSK4, proIGF2 is cleaved at Arg-129 and Arg-92 to generate big-IGF2 and mature IGF2.

The protein resides in the secreted. In terms of biological role, the insulin-like growth factors possess growth-promoting activity. Major fetal growth hormone in mammals. Plays a key role in regulating fetoplacental development. IGF2 is influenced by placental lactogen. Also involved in tissue differentiation. In adults, involved in glucose metabolism in adipose tissue, skeletal muscle and liver. Acts as a ligand for integrin which is required for IGF2 signaling. Positively regulates myogenic transcription factor MYOD1 function by facilitating the recruitment of transcriptional coactivators, thereby controlling muscle terminal differentiation. Inhibits myoblast differentiation and modulates metabolism via increasing the mitochondrial respiration rate. Preptin undergoes glucose-mediated co-secretion with insulin, and acts as a physiological amplifier of glucose-mediated insulin secretion. Exhibits osteogenic properties by increasing osteoblast mitogenic activity through phosphoactivation of MAPK1 and MAPK3. The chain is Insulin-like growth factor 2 from Neovison vison (American mink).